Reading from the N-terminus, the 1402-residue chain is MAAAGSLERSFVELSGAERERPRHFREFTVCDIGTASAAFGTVKYSESAGGFYYVESGKLFSITRNRFIHWKTSGDTLELVEESLDLNLLNNAVRLKFQNYNILPGGVHVSETQNHVIILILTNQTVHRLILPHPSRMYRSELVTESQMQSIFTDIGKVDFRDPCNSQLIPSVPGLSPGSTTSAAWLSSDGEALFALPSASGGIFVLKLPPYDVPGIASVVELKQSSVMQRLLTGWMPTAIRGDHGPSDRALSLAVHCVEHDAFIFALCQDHKLRMWSYKDQMCLMVADMLEYVPVNKDLRLTAGTGHKLRLAYSPSMGLYLGIYMHAPKRGQFCVFQLVSTENNRYSLDHISSLFTSQETLVDFALTSTDIWALWHDAENQTIVKYINFEHNVAGQWNPVFMQPLPEEEIVIRDDQDPREMYLRSLFTPGHFINAALCKALQIFCRGTERNLDLSWNELKKEITLAVENELQGSVTEYEFSQDEFRTLQQEFWCKFYACVLQYQEALSHPLALHLNPVTNMVCLLKKGYLSFLVPSSLVDHLYLLPDEHLLTEDETTISDDADVARDVLCLIKCLRMIGESVTMDMAVLMETSCYNLQSPEKAAEHILEDLITIDVENVMEDICSKLQEIRNPVHAIGLLIREMDYETEVEMEKGFDPAQPLNVRMNLSQLYGSSTAGYIVCRGVYKIASTRFLICRDLLILQQLLTRLGDAVILGAGQLFQAQQDLLHRTAPLLLSYYLIKWASQCLATDVPVDTLESNLQHLSVLELTDSGALMANKLVSSPQTIMELFFQEVARKQIISHLFSQPKAPLSQTGLNWPEMITAVTGYLLQLLWPSNPGCLFLECLMGNCQYVQLQDYIQLLHPWCQVNVGSCRFMLGRCYLVTGEVQKALECFCQAASEVGKEEFLDRLIRSEDGEIVSTPKLQYYDKVLRLLDVVGLPELVIQLATSAITEAGDDWKSQATLRTCIFKHHLDLGHNSQAYEALTQIPDSSRQLDCLRQLVVVLCERSQLQDLVEFPYVNLHNEVVGIIESRARAVDLMTHNYYELLYAFHIYRHNYRKAGTVMFEYGMRLGREVRTLRGLEKQGNCYLAAINCLRLIRPEYAWIVQPASGAVSDRPGASPKRNHDGECTAAPTNRQIEILELEDLEKEYSLARIRLTLARHDPSVIAIAGSSSAKEMSALLVQAGLFDTAISLCQTFTLPLTPVFEGLAFKCIKLQFGGEAAQGEAWSWLATNQLSSVITTKESSATDEAWRLLSTYLERYKVQNNLYHHCVINKLLSHGVPLPNWLINSYKKVDAAELLRLYLNYDLLEEAVDLVSEYVDAVLGKGHQYFGIEFPLSATAPMVWLPYSSIDQLLQALGENSANSHNIILSQKILDKLEDYQQKVDKATRDLLYRRDL.

A phosphoserine mark is found at S10, S456, S915, and S1123.

In terms of assembly, part of the nuclear pore complex (NPC). Forms part of the NUP160 subcomplex in the nuclear pore which is composed of NUP160, NUP133, NUP107 and NUP96. This complex plays a role in RNA export and in tethering NUP98 and NUP153 to the nucleus.

Its subcellular location is the nucleus. It is found in the nuclear pore complex. Functionally, functions as a component of the nuclear pore complex (NPC). Involved in poly(A)+ RNA transport. The chain is Nuclear pore complex protein Nup160 (Nup160) from Mus musculus (Mouse).